The primary structure comprises 76 residues: Toxin Acra III-1 (76 aa).

Residues 4-67 (PGNYPLDTRG…IWDAVKNHCT (64 aa)) form the LCN-type CS-alpha/beta domain. Intrachain disulfides connect C18-C41, C27-C46, and C31-C48.

Belongs to the long (3 C-C) scorpion toxin superfamily. Sodium channel inhibitor family. Beta subfamily. In terms of tissue distribution, expressed by the venom gland.

The protein resides in the secreted. Its function is as follows. Binds to sodium channels (Nav) and affects the channel activation process. The polypeptide is Toxin Acra III-1 (Androctonus crassicauda (Arabian fat-tailed scorpion)).